The primary structure comprises 366 residues: tRNA 2-selenouridine synthase (366 aa).

In terms of domain architecture, Rhodanese spans 12–135 (FLNDVPMMDA…MRTFLLDTLH (124 aa)). The active-site S-selanylcysteine intermediate is cysteine 95.

Belongs to the SelU family. In terms of assembly, monomer.

The catalysed reaction is 5-methylaminomethyl-2-thiouridine(34) in tRNA + selenophosphate + (2E)-geranyl diphosphate + H2O + H(+) = 5-methylaminomethyl-2-selenouridine(34) in tRNA + (2E)-thiogeraniol + phosphate + diphosphate. The enzyme catalyses 5-methylaminomethyl-2-thiouridine(34) in tRNA + (2E)-geranyl diphosphate = 5-methylaminomethyl-S-(2E)-geranyl-thiouridine(34) in tRNA + diphosphate. It carries out the reaction 5-methylaminomethyl-S-(2E)-geranyl-thiouridine(34) in tRNA + selenophosphate + H(+) = 5-methylaminomethyl-2-(Se-phospho)selenouridine(34) in tRNA + (2E)-thiogeraniol. It catalyses the reaction 5-methylaminomethyl-2-(Se-phospho)selenouridine(34) in tRNA + H2O = 5-methylaminomethyl-2-selenouridine(34) in tRNA + phosphate. Its function is as follows. Involved in the post-transcriptional modification of the uridine at the wobble position (U34) of tRNA(Lys), tRNA(Glu) and tRNA(Gln). Catalyzes the conversion of 2-thiouridine (S2U-RNA) to 2-selenouridine (Se2U-RNA). Acts in a two-step process involving geranylation of 2-thiouridine (S2U) to S-geranyl-2-thiouridine (geS2U) and subsequent selenation of the latter derivative to 2-selenouridine (Se2U) in the tRNA chain. This chain is tRNA 2-selenouridine synthase, found in Pseudomonas savastanoi pv. phaseolicola (strain 1448A / Race 6) (Pseudomonas syringae pv. phaseolicola (strain 1448A / Race 6)).